Reading from the N-terminus, the 565-residue chain is Dihydroxy-acid dehydratase (565 aa).

Asp83 is a binding site for Mg(2+). A [2Fe-2S] cluster-binding site is contributed by Cys124. Positions 125 and 126 each coordinate Mg(2+). N6-carboxylysine is present on Lys126. [2Fe-2S] cluster is bound at residue Cys197. Residue Glu451 coordinates Mg(2+). Ser477 (proton acceptor) is an active-site residue.

It belongs to the IlvD/Edd family. Homodimer. The cofactor is [2Fe-2S] cluster. Mg(2+) serves as cofactor.

It catalyses the reaction (2R)-2,3-dihydroxy-3-methylbutanoate = 3-methyl-2-oxobutanoate + H2O. The catalysed reaction is (2R,3R)-2,3-dihydroxy-3-methylpentanoate = (S)-3-methyl-2-oxopentanoate + H2O. It functions in the pathway amino-acid biosynthesis; L-isoleucine biosynthesis; L-isoleucine from 2-oxobutanoate: step 3/4. Its pathway is amino-acid biosynthesis; L-valine biosynthesis; L-valine from pyruvate: step 3/4. Its function is as follows. Functions in the biosynthesis of branched-chain amino acids. Catalyzes the dehydration of (2R,3R)-2,3-dihydroxy-3-methylpentanoate (2,3-dihydroxy-3-methylvalerate) into 2-oxo-3-methylpentanoate (2-oxo-3-methylvalerate) and of (2R)-2,3-dihydroxy-3-methylbutanoate (2,3-dihydroxyisovalerate) into 2-oxo-3-methylbutanoate (2-oxoisovalerate), the penultimate precursor to L-isoleucine and L-valine, respectively. This is Dihydroxy-acid dehydratase from Symbiobacterium thermophilum (strain DSM 24528 / JCM 14929 / IAM 14863 / T).